Reading from the N-terminus, the 212-residue chain is Peptide methionine sulfoxide reductase MsrA (212 aa).

Residues 1–14 (MNSIDKTQRITQSD) show a composition bias toward polar residues. The segment at 1–21 (MNSIDKTQRITQSDALPGRST) is disordered. Residue Cys-52 is part of the active site.

Belongs to the MsrA Met sulfoxide reductase family.

It carries out the reaction L-methionyl-[protein] + [thioredoxin]-disulfide + H2O = L-methionyl-(S)-S-oxide-[protein] + [thioredoxin]-dithiol. The catalysed reaction is [thioredoxin]-disulfide + L-methionine + H2O = L-methionine (S)-S-oxide + [thioredoxin]-dithiol. In terms of biological role, has an important function as a repair enzyme for proteins that have been inactivated by oxidation. Catalyzes the reversible oxidation-reduction of methionine sulfoxide in proteins to methionine. This chain is Peptide methionine sulfoxide reductase MsrA, found in Pectobacterium atrosepticum (strain SCRI 1043 / ATCC BAA-672) (Erwinia carotovora subsp. atroseptica).